Reading from the N-terminus, the 180-residue chain is E3 ubiquitin-protein ligase RNF5 (180 aa).

A2 carries the post-translational modification N-acetylalanine. An RING-type zinc finger spans residues 27–68 (CNICLETAREAVVSVCGHLYCWPCLHQWLETRPERQECPVCK). The tract at residues 79–110 (LYGRGSQKPQDPRLKTPPRPQGQRPAPESRGG) is disordered. Position 84 is a phosphoserine (S84). At T94 the chain carries Phosphothreonine. The residue at position 107 (S107) is a Phosphoserine. 2 helical membrane passes run 118–138 (GGFH…TTVF) and 160–180 (SWQD…LLSI).

Belongs to the RNF5 family. Interacts with PXN. Interacts with Salmonella typhimurium sopA. Interacts with JKAMP. Interacts with STING1; the interaction of endogenous proteins is dependent on viral infection. In terms of tissue distribution, widely expressed.

It is found in the cell membrane. It localises to the mitochondrion membrane. Its subcellular location is the endoplasmic reticulum membrane. It catalyses the reaction S-ubiquitinyl-[E2 ubiquitin-conjugating enzyme]-L-cysteine + [acceptor protein]-L-lysine = [E2 ubiquitin-conjugating enzyme]-L-cysteine + N(6)-ubiquitinyl-[acceptor protein]-L-lysine.. Its pathway is protein modification; protein ubiquitination. Membrane-bound E3 ubiquitin-protein ligase that mediates ubiquitination of target proteins. May function together with E2 ubiquitin-conjugating enzymes UBE2D1/UBCH5A and UBE2D2/UBC4. Mediates ubiquitination of PXN/paxillin,thereby regulating cell motility and localization of PXN/paxillin. Catalyzes ubiquitination of Salmonella type III secreted protein sopA. Mediates the 'Lys-63'-linked polyubiquitination of JKAMP thereby regulating JKAMP function by decreasing its association with components of the proteasome and ERAD; the ubiquitination appears to involve E2 ubiquitin-conjugating enzyme UBE2N. Mediates the 'Lys-48'-linked polyubiquitination of STING1 at 'Lys-150' leading to its proteasomal degradation; the ubiquitination occurs in mitochondria after viral transfection and regulates antiviral responses. Catalyzes ubiquitination and subsequent degradation of ATG4B, thereby inhibiting autophagy. This chain is E3 ubiquitin-protein ligase RNF5, found in Homo sapiens (Human).